A 122-amino-acid chain; its full sequence is Large ribosomal subunit protein uL14 (122 aa).

Belongs to the universal ribosomal protein uL14 family. In terms of assembly, part of the 50S ribosomal subunit. Forms a cluster with proteins L3 and L19. In the 70S ribosome, L14 and L19 interact and together make contacts with the 16S rRNA in bridges B5 and B8.

Functionally, binds to 23S rRNA. Forms part of two intersubunit bridges in the 70S ribosome. The polypeptide is Large ribosomal subunit protein uL14 (Cupriavidus taiwanensis (strain DSM 17343 / BCRC 17206 / CCUG 44338 / CIP 107171 / LMG 19424 / R1) (Ralstonia taiwanensis (strain LMG 19424))).